Here is a 313-residue protein sequence, read N- to C-terminus: Uracil-DNA glycosylase (313 aa).

The segment at 35-68 is disordered; it reads DEPMPKKCRRPAGPPKGFISTRGDTSPSSDNNHI. Residues 56–68 show a composition bias toward polar residues; sequence RGDTSPSSDNNHI. D153 acts as the Proton acceptor in catalysis.

The protein belongs to the uracil-DNA glycosylase (UDG) superfamily. UNG family.

The protein localises to the host nucleus. The catalysed reaction is Hydrolyzes single-stranded DNA or mismatched double-stranded DNA and polynucleotides, releasing free uracil.. Functionally, excises uracil residues from the DNA which can arise as a result of misincorporation of dUMP residues by DNA polymerase or deamination of cytosines. Therefore may reduce deleterious uracil incorporation into the viral genome, particularly in terminally differentiated cells which lack DNA repair enzymes. In Gallus gallus (Chicken), this protein is Uracil-DNA glycosylase (MDV014).